Consider the following 188-residue polypeptide: MPVADTSQHISGVAERYASSLFELALEEGAVPAVTADLDRFQAMLDDSGDLKRFISSPVFSAEEQVGAVQALATKAGFGAYFTNFLKVVAKNRRLFALPGMVKAFRIIAAQHRGEVSAEITSAHALTKAQENELKAALKGVTGKDVAIAVTVDPSILGGLIVKVGSRQIDTSLRTKLSTLKLALKEVG.

The protein belongs to the ATPase delta chain family. F-type ATPases have 2 components, F(1) - the catalytic core - and F(0) - the membrane proton channel. F(1) has five subunits: alpha(3), beta(3), gamma(1), delta(1), epsilon(1). F(0) has three main subunits: a(1), b(2) and c(10-14). The alpha and beta chains form an alternating ring which encloses part of the gamma chain. F(1) is attached to F(0) by a central stalk formed by the gamma and epsilon chains, while a peripheral stalk is formed by the delta and b chains.

The protein localises to the cell inner membrane. In terms of biological role, f(1)F(0) ATP synthase produces ATP from ADP in the presence of a proton or sodium gradient. F-type ATPases consist of two structural domains, F(1) containing the extramembraneous catalytic core and F(0) containing the membrane proton channel, linked together by a central stalk and a peripheral stalk. During catalysis, ATP synthesis in the catalytic domain of F(1) is coupled via a rotary mechanism of the central stalk subunits to proton translocation. Functionally, this protein is part of the stalk that links CF(0) to CF(1). It either transmits conformational changes from CF(0) to CF(1) or is implicated in proton conduction. The sequence is that of ATP synthase subunit delta from Rhizobium rhizogenes (strain K84 / ATCC BAA-868) (Agrobacterium radiobacter).